The following is a 265-amino-acid chain: Ribosomal RNA small subunit methyltransferase A (265 aa).

Residues N13, L15, G39, E59, D87, and N108 each coordinate S-adenosyl-L-methionine.

It belongs to the class I-like SAM-binding methyltransferase superfamily. rRNA adenine N(6)-methyltransferase family. RsmA subfamily.

It is found in the cytoplasm. The catalysed reaction is adenosine(1518)/adenosine(1519) in 16S rRNA + 4 S-adenosyl-L-methionine = N(6)-dimethyladenosine(1518)/N(6)-dimethyladenosine(1519) in 16S rRNA + 4 S-adenosyl-L-homocysteine + 4 H(+). Its function is as follows. Specifically dimethylates two adjacent adenosines (A1518 and A1519) in the loop of a conserved hairpin near the 3'-end of 16S rRNA in the 30S particle. May play a critical role in biogenesis of 30S subunits. This Aliarcobacter butzleri (strain RM4018) (Arcobacter butzleri) protein is Ribosomal RNA small subunit methyltransferase A.